We begin with the raw amino-acid sequence, 274 residues long: 3-methyl-2-oxobutanoate hydroxymethyltransferase (274 aa).

Residues D49 and D88 each coordinate Mg(2+). 3-methyl-2-oxobutanoate-binding positions include 49-50 (DS), D88, and K118. E120 contacts Mg(2+). E187 functions as the Proton acceptor in the catalytic mechanism.

It belongs to the PanB family. In terms of assembly, homodecamer; pentamer of dimers. Mg(2+) is required as a cofactor.

It localises to the cytoplasm. The catalysed reaction is 3-methyl-2-oxobutanoate + (6R)-5,10-methylene-5,6,7,8-tetrahydrofolate + H2O = 2-dehydropantoate + (6S)-5,6,7,8-tetrahydrofolate. Its pathway is cofactor biosynthesis; (R)-pantothenate biosynthesis; (R)-pantoate from 3-methyl-2-oxobutanoate: step 1/2. In terms of biological role, catalyzes the reversible reaction in which hydroxymethyl group from 5,10-methylenetetrahydrofolate is transferred onto alpha-ketoisovalerate to form ketopantoate. The sequence is that of 3-methyl-2-oxobutanoate hydroxymethyltransferase from Nitrobacter winogradskyi (strain ATCC 25391 / DSM 10237 / CIP 104748 / NCIMB 11846 / Nb-255).